A 214-amino-acid polypeptide reads, in one-letter code: Ribonuclease S-2 (214 aa).

The first 22 residues, 1–22 (MSKSQLTSVFFILLCALSPIYG), serve as a signal peptide directing secretion. Cys38 and Cys43 are disulfide-bonded. N-linked (GlcNAc...) asparagine glycosylation is present at Asn49. His53 acts as the Proton donor in catalysis. Residue His53 participates in RNA binding. A glycan (N-linked (GlcNAc...) asparagine) is linked at Asn59. A disulfide bridge links Cys67 with Cys116. RNA-binding positions include 91 to 92 (DL), Lys94, and Phe105. The active site involves Glu109. 112-113 (KH) lines the RNA pocket. His113 acts as the Proton acceptor in catalysis. The N-linked (GlcNAc...) asparagine glycan is linked to Asn160. Intrachain disulfides connect Cys175–Cys204 and Cys187–Cys198.

Belongs to the RNase T2 family.

It localises to the secreted. Its subcellular location is the extracellular space. The catalysed reaction is a ribonucleotidyl-ribonucleotide-RNA + H2O = a 3'-end 3'-phospho-ribonucleotide-RNA + a 5'-end dephospho-ribonucleoside-RNA + H(+). Functionally, self-incompatibility (SI) is the inherited ability of a flowering plant to prevent self-fertilization by discriminating between self and non-self pollen during pollination. In many species of the Solanaceae, self-incompatibility is controlled by the single, multiallelic locus S. This stylar glycoprotein is associated with expression of self-incompatibility in potato. This is Ribonuclease S-2 (S-2) from Nicotiana alata (Winged tobacco).